A 420-amino-acid chain; its full sequence is Methyltransferase/ribosomally synthesized cyclic peptide gymnopeptides precursor gymMA1 (420 aa).

The methyltransferase domain stretch occupies residues 1 to 251 (MQSSTQKQAG…GISTFYIPPK (251 aa)). Catalysis depends on residues Arg-72, Tyr-76, and Tyr-98. S-adenosyl-L-methionine contacts are provided by Tyr-98, His-100, Val-103, Ala-130, Gln-172, Ala-213, Ser-244, and Thr-245. Residues 252-378 (ELKDPSMDIM…WALRCAMKKM (127 aa)) are clasp domain. The precursor leader stretch occupies residues 379 to 392 (PSSFMDEVDANNLP). N-methylvaline occurs at positions 394 and 396. Gly-398 bears the N-methylglycine mark. The residue at position 399 (Val-399) is an N-methylvaline. Ala-400 carries the post-translational modification N-methylalanine. Gly-402 is subject to N-methylglycine. N-methylvaline is present on residues Val-404, Val-406, Val-408, and Val-410.

In the N-terminal section; belongs to the precorrin methyltransferase family. As to quaternary structure, homodimer. Post-translationally, gymMA1 automethylates at Val-394, Val-396, Gly-398, Val-399, Ala-400, Gly-402, Val-404, Val-406, Val-408 and Val-410 before being processed by a prolyloligopeptidase which likely forms a peptidyl ester upon removal of the follower propeptide, which then undergoes macrocyclization with the N-terminus of the modified core peptide. Peptide backbone alpha-N-methylations change the physicochemical properties of amide bonds to provide structural constraints and other favorable characteristics including biological membrane permeability to peptides.

Its pathway is mycotoxin biosynthesis. In terms of biological role, fusion protein of the methyltransferase gymM1 and the gymnopeptides precursor; part of the gene cluster that mediates the biosynthesis of gymnopeptides, highly methylated cyclic octadecapeptides with striking antiproliferative activity on several human cancer cell lines. Gymnopeptides derive from the C-terminus of the gymMA1 protein, and it is the gymMA1 protein that methylates its own C-terminus using S-adenosyl methionine (SAM). The C-terminus is subsequently cleaved off and macrocyclized by a prolyloligopeptidase to give the final product. The chain is Methyltransferase/ribosomally synthesized cyclic peptide gymnopeptides precursor gymMA1 from Gymnopus fusipes (Spindle toughshank).